We begin with the raw amino-acid sequence, 359 residues long: Fructose-bisphosphate aldolase (359 aa).

Ser61 is a D-glyceraldehyde 3-phosphate binding site. Residue Asp109 is the Proton donor of the active site. Positions 110, 144, 174, and 226 each coordinate Zn(2+). Gly227 serves as a coordination point for dihydroxyacetone phosphate. His265 contributes to the Zn(2+) binding site. Dihydroxyacetone phosphate-binding positions include 266 to 268 and 287 to 290; these read GGS and NIDT.

Belongs to the class II fructose-bisphosphate aldolase family. Zn(2+) is required as a cofactor.

The catalysed reaction is beta-D-fructose 1,6-bisphosphate = D-glyceraldehyde 3-phosphate + dihydroxyacetone phosphate. It participates in carbohydrate degradation; glycolysis; D-glyceraldehyde 3-phosphate and glycerone phosphate from D-glucose: step 4/4. In terms of biological role, catalyzes the aldol condensation of dihydroxyacetone phosphate (DHAP or glycerone-phosphate) with glyceraldehyde 3-phosphate (G3P) to form fructose 1,6-bisphosphate (FBP) in gluconeogenesis and the reverse reaction in glycolysis. The sequence is that of Fructose-bisphosphate aldolase (fba) from Borreliella burgdorferi (strain ATCC 35210 / DSM 4680 / CIP 102532 / B31) (Borrelia burgdorferi).